We begin with the raw amino-acid sequence, 319 residues long: Acetyl-coenzyme A carboxylase carboxyl transferase subunit alpha (319 aa).

Positions 32–293 constitute a CoA carboxyltransferase C-terminal domain; the sequence is NIQEEISRLQ…HTALAEALQT (262 aa).

It belongs to the AccA family. Acetyl-CoA carboxylase is a heterohexamer composed of biotin carboxyl carrier protein (AccB), biotin carboxylase (AccC) and two subunits each of ACCase subunit alpha (AccA) and ACCase subunit beta (AccD).

The protein resides in the cytoplasm. It catalyses the reaction N(6)-carboxybiotinyl-L-lysyl-[protein] + acetyl-CoA = N(6)-biotinyl-L-lysyl-[protein] + malonyl-CoA. The protein operates within lipid metabolism; malonyl-CoA biosynthesis; malonyl-CoA from acetyl-CoA: step 1/1. Functionally, component of the acetyl coenzyme A carboxylase (ACC) complex. First, biotin carboxylase catalyzes the carboxylation of biotin on its carrier protein (BCCP) and then the CO(2) group is transferred by the carboxyltransferase to acetyl-CoA to form malonyl-CoA. The chain is Acetyl-coenzyme A carboxylase carboxyl transferase subunit alpha from Thioalkalivibrio sulfidiphilus (strain HL-EbGR7).